Here is a 277-residue protein sequence, read N- to C-terminus: 5'-nucleotidase SurE (277 aa).

Positions 16, 17, 48, and 101 each coordinate a divalent metal cation.

Belongs to the SurE nucleotidase family. A divalent metal cation is required as a cofactor.

The protein resides in the cytoplasm. The enzyme catalyses a ribonucleoside 5'-phosphate + H2O = a ribonucleoside + phosphate. Its function is as follows. Nucleotidase that shows phosphatase activity on nucleoside 5'-monophosphates. The chain is 5'-nucleotidase SurE from Parvibaculum lavamentivorans (strain DS-1 / DSM 13023 / NCIMB 13966).